The primary structure comprises 356 residues: Glucan endo-1,3-beta-glucosidase, acidic isoform GL153 (356 aa).

The N-terminal stretch at Met1 to Ala29 is a signal peptide. Gln30 is subject to Pyrrolidone carboxylic acid. An N-linked (GlcNAc...) asparagine glycan is attached at Asn95. Catalysis depends on Glu124, which acts as the Proton donor. The active-site Nucleophile is the Glu264.

The protein belongs to the glycosyl hydrolase 17 family. In terms of tissue distribution, is expressed primarily in epidermal cell of healthy plant, and following induction by ethylene, accumulates in mesophyll cells.

It is found in the secreted. The protein resides in the extracellular space. It catalyses the reaction Hydrolysis of (1-&gt;3)-beta-D-glucosidic linkages in (1-&gt;3)-beta-D-glucans.. In terms of biological role, is thought to be an important plant defense-related product against fungal pathogens. The sequence is that of Glucan endo-1,3-beta-glucosidase, acidic isoform GL153 (GGL4) from Nicotiana tabacum (Common tobacco).